The following is a 498-amino-acid chain: Glycerol kinase (498 aa).

Thr-12 is an ADP binding site. ATP contacts are provided by Thr-12, Thr-13, and Ser-14. Thr-12 is a sn-glycerol 3-phosphate binding site. Arg-16 contacts ADP. Sn-glycerol 3-phosphate is bound by residues Arg-82, Glu-83, Tyr-134, and Asp-243. Arg-82, Glu-83, Tyr-134, Asp-243, and Gln-244 together coordinate glycerol. Residues Thr-265 and Gly-308 each contribute to the ADP site. ATP-binding residues include Thr-265, Gly-308, Gln-312, and Gly-409. Positions 409 and 413 each coordinate ADP.

Belongs to the FGGY kinase family. Homotetramer and homodimer (in equilibrium).

It carries out the reaction glycerol + ATP = sn-glycerol 3-phosphate + ADP + H(+). Its pathway is polyol metabolism; glycerol degradation via glycerol kinase pathway; sn-glycerol 3-phosphate from glycerol: step 1/1. Its activity is regulated as follows. Activated by phosphorylation and inhibited by fructose 1,6-bisphosphate (FBP). In terms of biological role, key enzyme in the regulation of glycerol uptake and metabolism. Catalyzes the phosphorylation of glycerol to yield sn-glycerol 3-phosphate. The polypeptide is Glycerol kinase (Clostridium botulinum (strain Langeland / NCTC 10281 / Type F)).